Here is a 918-residue protein sequence, read N- to C-terminus: NEDD4-like E3 ubiquitin-protein ligase WWP1 (918 aa).

The region spanning 1–116 (MATASPRSDT…THNRKLEKVK (116 aa)) is the C2 domain. Polar residues-rich tracts occupy residues 150 to 164 (TNRSSSPPIEIQQNG), 209 to 219 (NGENTPSSPSQ), and 235 to 258 (SAPTSDTVNGESSSVLADNTSTMG). Disordered stretches follow at residues 150–182 (TNRSSSPPIEIQQNGDALHENGDPATRTTPRLP) and 209–360 (NGEN…PHGR). Positions 266 to 281 (TTSTSNCTSTTTQEPP) are enriched in low complexity. 4 consecutive WW domains span residues 345–378 (EALPSGWEQRKDPHGRTYYVDHNTRTTTWERPQP), 377–410 (QPLPPGWERRVDDRGRVYYVDHNTRTTTWQRPTM), 452–485 (GPLPPGWEKRVDSTDRVYFVNHNTKTTQWEDPRT), and 492–525 (EPLPEGWEIRYTREGVRYFVDHNTRTTTFKDPRN). Residues 345–525 (EALPSGWEQR…RTTTFKDPRN (181 aa)) form an interaction with ERBB4 region. Positions 345–527 (EALPSGWEQR…TTFKDPRNGK (183 aa)) are required for interaction with and ubiquitination of AMOTL2. Required for interaction with YAP1. Positions 584–918 (KPYDLRRRLY…IEETEGFGQE (335 aa)) constitute an HECT domain. The Glycyl thioester intermediate role is filled by C886.

Interacts with the Crumbs complex components PALS1 and PATJ; interaction with the Crumbs complex is enhanced by WWP1's interaction with AMOTL2 and facilitates WWP1 localization to the plasma membrane. Interaction with the Crumbs complex promotes WWP1 monoubiquitination of AMOTL2, which activates the Hippo signaling pathway. Binds SCNN1A, SCNN1B, SCNN1G, WBP1, WBP2, DRPLA and adenovirus type 2 PIII. Interacts with TGIF. Binds KLF2 AND HIVEP3. Interacts with RNF11. Interacts with SPART. Interacts with NDFIP1 and NDFIP2; this interaction activates the E3 ubiquitin-protein ligase. Interacts with ERBB4 isoforms JM-B CYT-1 and JM-A CYT-1. Does not interact with ERB4 isoform JMA-A CYT-2. Interacts with SMAD1, SMAD2, SMAD3, SMAD5, SMAD6, SMAD7, TGFBR1 and TGFBR2. Associates with the TGFBR1:TGFBR2 receptor complex in presence of SMAD7. Interacts with SKIL isoform 1. Interacts with TP63 isoform 1 and isoform 2. Interacts (via WW domains) with ARRDC1, ARRDC2 and ARRDC3. Post-translationally, auto-ubiquitinated and ubiquitinated by RNF11.

The protein resides in the cytoplasm. Its subcellular location is the cell membrane. It is found in the nucleus. The protein localises to the cell junction. It catalyses the reaction S-ubiquitinyl-[E2 ubiquitin-conjugating enzyme]-L-cysteine + [acceptor protein]-L-lysine = [E2 ubiquitin-conjugating enzyme]-L-cysteine + N(6)-ubiquitinyl-[acceptor protein]-L-lysine.. The protein operates within protein modification; protein ubiquitination. Activated by NDFIP1- and NDFIP2-binding. E3 ubiquitin-protein ligase which accepts ubiquitin from an E2 ubiquitin-conjugating enzyme in the form of a thioester and then directly transfers the ubiquitin to targeted substrates. Ubiquitinates and promotes degradation of SMAD2 in response to TGF-beta signaling, which requires interaction with TGIF. Ubiquitinates ERBB4 isoforms JM-A CYT-1 and JM-B CYT-1, KLF2, KLF5 and TP63 and promotes their proteasomal degradation. Ubiquitinates RNF11 without targeting it for degradation. Ubiquitinates and promotes degradation of TGFBR1; the ubiquitination is enhanced by SMAD7. Ubiquitinates SMAD6 and SMAD7. Activates the Hippo signaling pathway in response to cell contact inhibition and recruitment to the Crumbs complex at the cell membrane. Monoubiquitinates AMOTL2 which facilitates its interaction with and activation of LATS2. LATS2 then phosphorylates YAP1, excluding it from the nucleus and therefore ultimately represses YAP1-driven transcription of target genes. The chain is NEDD4-like E3 ubiquitin-protein ligase WWP1 (Wwp1) from Mus musculus (Mouse).